Reading from the N-terminus, the 160-residue chain is MGVTKKPDLNDPVLRAKLAKGMGHNYYGEPAWPNDLLYIFPVVILGTIACNVGLAVLEPSMIGEPADPFATPLEILPEWYFFPVFQILRTVPNKLLGVLLMVSVPTGLLTVPFLENVNKFQNPFRRPVATTVFLFGTALSLWLGIGATLPIDKSLTLGLF.

3 consecutive transmembrane segments (helical) span residues 36–56 (LLYIFPVVILGTIACNVGLAV), 95–115 (LLGVLLMVSVPTGLLTVPFLE), and 131–151 (TVFLFGTALSLWLGIGATLPI).

The protein belongs to the cytochrome b family. PetD subfamily. As to quaternary structure, the 4 large subunits of the cytochrome b6-f complex are cytochrome b6, subunit IV (17 kDa polypeptide, petD), cytochrome f and the Rieske protein, while the 4 small subunits are petG, petL, petM and petN. The complex functions as a dimer.

The protein resides in the plastid. Its subcellular location is the chloroplast thylakoid membrane. In terms of biological role, component of the cytochrome b6-f complex, which mediates electron transfer between photosystem II (PSII) and photosystem I (PSI), cyclic electron flow around PSI, and state transitions. This chain is Cytochrome b6-f complex subunit 4, found in Amborella trichopoda.